Reading from the N-terminus, the 120-residue chain is Aspartate 1-decarboxylase (120 aa).

Ser25 serves as the catalytic Schiff-base intermediate with substrate; via pyruvic acid. Pyruvic acid (Ser) is present on Ser25. Thr57 serves as a coordination point for substrate. The active-site Proton donor is Tyr58. A substrate-binding site is contributed by 73–75; it reads GAA.

It belongs to the PanD family. Heterooctamer of four alpha and four beta subunits. Requires pyruvate as cofactor. Is synthesized initially as an inactive proenzyme, which is activated by self-cleavage at a specific serine bond to produce a beta-subunit with a hydroxyl group at its C-terminus and an alpha-subunit with a pyruvoyl group at its N-terminus.

The protein resides in the cytoplasm. It catalyses the reaction L-aspartate + H(+) = beta-alanine + CO2. It functions in the pathway cofactor biosynthesis; (R)-pantothenate biosynthesis; beta-alanine from L-aspartate: step 1/1. Catalyzes the pyruvoyl-dependent decarboxylation of aspartate to produce beta-alanine. This is Aspartate 1-decarboxylase from Polynucleobacter asymbioticus (strain DSM 18221 / CIP 109841 / QLW-P1DMWA-1) (Polynucleobacter necessarius subsp. asymbioticus).